Here is a 370-residue protein sequence, read N- to C-terminus: Galanin receptor type 3 (370 aa).

Residues 1-20 (MADIQNISLDSPGSVGAVAV) lie on the Extracellular side of the membrane. Residue asparagine 6 is glycosylated (N-linked (GlcNAc...) asparagine). A helical membrane pass occupies residues 21–41 (PVVFALIFLLGMVGNGLVLAV). Over 42–57 (LLQPGPSAWQEPGSTT) the chain is Cytoplasmic. A helical transmembrane segment spans residues 58–78 (DLFILNLAVADLCFILCCVPF). Residues 79–96 (QAAIYTLDAWLFGAFVCK) are Extracellular-facing. A disulfide bridge connects residues cysteine 95 and cysteine 172. Residues 97 to 118 (TVHLLIYLTMYASSFTLAAVSV) traverse the membrane as a helical segment. Over 119–138 (DRYLAVRHPLRSRALRTPRN) the chain is Cytoplasmic. Residues 139–159 (ARAAVGLVWLLAALFSAPYLS) form a helical membrane-spanning segment. Residues 160–184 (YYGTVRYGALELCVPAWEDARRRAL) are Extracellular-facing. A helical transmembrane segment spans residues 185–205 (DVATFAAGYLLPVTVVSLAYG). Residues 206–236 (RTLCFLWAAVGPAGAAAAEARRRATGRAGRA) are Cytoplasmic-facing. Residues 237 to 257 (MLTVAALYALCWGPHHALILC) traverse the membrane as a helical segment. Over 258–259 (FW) the chain is Extracellular. The helical transmembrane segment at 260–280 (YGRFAFSPATYACRLASHCLA) threads the bilayer. The Cytoplasmic portion of the chain corresponds to 281-370 (YANSCLNPLV…RLTLSARGPQ (90 aa)). A lipid anchor (S-palmitoyl cysteine) is attached at cysteine 308. The segment at 328–370 (QPASSGPAGYPGDARPRGWSMEPRGDALRGGETRLTLSARGPQ) is disordered. Residues 350-359 (PRGDALRGGE) are compositionally biased toward basic and acidic residues.

Belongs to the G-protein coupled receptor 1 family.

The protein resides in the cell membrane. Its function is as follows. Receptor for the hormone galanin and spexin-1. This chain is Galanin receptor type 3 (Galr3), found in Mus musculus (Mouse).